Reading from the N-terminus, the 84-residue chain is MKYFVIALALAVALVCIAESTAYEVNEELENELDDLDDAAWLAVAEELQGLEDFEESRGLFGKLIKKFGRKAISYAVKKARGKH.

The first 22 residues, 1-22 (MKYFVIALALAVALVCIAESTA), serve as a signal peptide directing secretion. A propeptide spanning residues 23 to 58 (YEVNEELENELDDLDDAAWLAVAEELQGLEDFEESR) is cleaved from the precursor. A Processing quadruplet motif motif is present at residues 55–58 (EESR).

In terms of processing, cleavage of the propeptide depends on the processing quadruplet motif (XXXR, with at least one of X being E). Expressed by the venom gland.

Its subcellular location is the secreted. It has antimicrobial activity against Gram-positive bacteria (A.globiformis VKM Ac-1112 (MIC=0.7 uM), and B.subtilis VKM B-501 (MIC=0.4 uM)), Gram-negative bacteria (E.coli DH5-alpha (MIC=1.0 uM), E.coli MH1 (MIC=0.7 uM), and P.aeruginosa PAO1 (MIC=6.7 uM)), and yeasts (P.pastoris GS115 (MIC=6.7 uM), and S.cerevisiae Y190 (MIC=54 uM)). Also has a strong hemolytic activity against rabbit erythrocytes. Causes paralysis, but is not lethal when injected into insect (M.domestica) larvae. The chain is M-zodatoxin-Lt2a from Lachesana tarabaevi (Spider).